The following is a 459-amino-acid chain: Flagellar radial spoke protein 6 (459 aa).

Arg-267 carries the asymmetric dimethylarginine modification. The tract at residues 309–330 (QGRTVTHKRDPPDEEEEPEKNF) is disordered. An Asymmetric dimethylarginine modification is found at Arg-398. The tract at residues 418–459 (CPPPPPVPQWGAPAAGVEGGQQLLLECNDLPPKPAPPEEEDE) is disordered.

It belongs to the flagellar radial spoke RSP4/6 family. The radial spoke head is made of five different polypeptides (RSP1, RSP4, RSP6, RSP9, and RSP10). Asymmetrically dimethylated at Arg-267 and Arg-398 during flagellum resorption. Probably methylated by PRMT1.

Its subcellular location is the cytoplasm. The protein resides in the cytoskeleton. The protein localises to the flagellum axoneme. Flagellar radial spokes contribute to the regulation of dynein arm activity and thus the pattern of flagellar bending. They consist of a thin stalk, which is attached to the a subfiber of the outer doublet microtubule, and a bulbous head, which is attached to the stalk and appears to interact with the projections from the central pair of microtubules. The protein is Flagellar radial spoke protein 6 (RSP6) of Chlamydomonas reinhardtii (Chlamydomonas smithii).